Reading from the N-terminus, the 339-residue chain is Cytochrome c biogenesis protein CcsA (339 aa).

A run of 7 helical transmembrane segments spans residues 6 to 26 (LEHI…LVFW), 37 to 57 (IGSL…GLLL), 71 to 91 (LYES…VSEI), 97 to 117 (WLGI…TVGL), 142 to 162 (MMIP…ALLI), 247 to 267 (IISL…VWVN), and 281 to 299 (TWAL…IRMI).

This sequence belongs to the CcmF/CycK/Ccl1/NrfE/CcsA family. May interact with Ccs1.

It is found in the plastid. Its subcellular location is the chloroplast thylakoid membrane. Functionally, required during biogenesis of c-type cytochromes (cytochrome c6 and cytochrome f) at the step of heme attachment. The polypeptide is Cytochrome c biogenesis protein CcsA (Anthoceros angustus (Hornwort)).